Reading from the N-terminus, the 253-residue chain is Major prion protein (253 aa).

Residues 1–22 (MANLGCWMLVLFVATWSNLGLC) form the signal peptide. The interaction with ADGRG6 stretch occupies residues 23–38 (KKRPKPGGWNTGGSRY). The interaction with GRB2, ERI3 and SYN1 stretch occupies residues 23–230 (KKRPKPGGWN…ESQAYYQRGS (208 aa)). The segment at 25 to 108 (RPKPGGWNTG…WNKPSKPKTN (84 aa)) is disordered. Repeat copies occupy residues 51-59 (PQGGGGWGQ), 60-67 (PHGGGWGQ), 68-75 (PHGGGWGQ), 76-83 (PHGGGWGQ), and 84-91 (PHGGGWGQ). The tract at residues 51–91 (PQGGGGWGQPHGGGWGQPHGGGWGQPHGGGWGQPHGGGWGQ) is 5 X 8 AA tandem repeats of P-H-G-G-G-W-G-Q. The segment covering 52 to 95 (QGGGGWGQPHGGGWGQPHGGGWGQPHGGGWGQPHGGGWGQGGGT) has biased composition (gly residues). 12 residues coordinate Cu(2+): H61, G62, G63, H69, G70, G71, H77, G78, G79, H85, G86, and G87. A disulfide bridge connects residues C179 and C214. 2 N-linked (GlcNAc...) asparagine glycosylation sites follow: N181 and N197. The GPI-anchor amidated serine moiety is linked to residue S230. Residues 231 to 253 (SMVLFSSPPVILLISFLIFLIVG) constitute a propeptide, removed in mature form.

Belongs to the prion family. Monomer and homodimer. Has a tendency to aggregate into amyloid fibrils containing a cross-beta spine, formed by a steric zipper of superposed beta-strands. Soluble oligomers may represent an intermediate stage on the path to fibril formation. Copper binding may promote oligomerization. Interacts with GRB2, APP, ERI3/PRNPIP and SYN1. Mislocalized cytosolically exposed PrP interacts with MGRN1; this interaction alters MGRN1 subcellular location and causes lysosomal enlargement. Interacts with APP. Interacts with KIAA1191. Interacts with ADGRG6.

It is found in the cell membrane. The protein resides in the golgi apparatus. Its function is as follows. Its primary physiological function is unclear. May play a role in neuronal development and synaptic plasticity. May be required for neuronal myelin sheath maintenance. May promote myelin homeostasis through acting as an agonist for ADGRG6 receptor. May play a role in iron uptake and iron homeostasis. Soluble oligomers are toxic to cultured neuroblastoma cells and induce apoptosis (in vitro). Association with GPC1 (via its heparan sulfate chains) targets PRNP to lipid rafts. Also provides Cu(2+) or Zn(2+) for the ascorbate-mediated GPC1 deaminase degradation of its heparan sulfate side chains. The polypeptide is Major prion protein (PRNP) (Pongo pygmaeus (Bornean orangutan)).